The following is a 143-amino-acid chain: Transcription antitermination protein NusB (143 aa).

It belongs to the NusB family.

Functionally, involved in transcription antitermination. Required for transcription of ribosomal RNA (rRNA) genes. Binds specifically to the boxA antiterminator sequence of the ribosomal RNA (rrn) operons. This is Transcription antitermination protein NusB from Clostridium botulinum (strain Kyoto / Type A2).